The sequence spans 788 residues: Cell division cycle protein 27 homolog (788 aa).

The segment at 198-436 (YLDSPASSLK…PLPSVASSLN (239 aa)) is disordered. The segment covering 217–229 (GPSSSSAASTAEP) has biased composition (low complexity). Polar residues-rich tracts occupy residues 241 to 273 (RGTI…SRIN), 293 to 303 (SSVTGSRSSLF), and 319 to 360 (NRAN…NPVR). Positions 366-378 (ADAAAAANKTAKT) are enriched in low complexity. Residues 391-414 (VSRNSNLARSLSGSTNSVASTASE) show a composition bias toward polar residues. 5 TPR repeats span residues 561–594 (PQSW…DKRF), 596–628 (YAYT…SPRD), 629–662 (YRAW…NPTN), 664–696 (AMLC…NPLD), and 731–764 (AFIF…DPRG).

The protein belongs to the APC3/CDC27 family. As to quaternary structure, the APC/C complex is probably composed of at least 12 subunits: apc-2, apc-10, apc-11, cdc-26, emb-1, emb-27, emb-30, mat-1, mat-2, mat-3, such-1 and gfi-3. As to expression, expressed in the ventral nerve cord.

Its subcellular location is the nucleus. It functions in the pathway protein modification; protein ubiquitination. In terms of biological role, probable component of the anaphase promoting complex/cyclosome (APC/C), a cell cycle-regulated E3 ubiquitin ligase that controls progression through mitosis and the G1 phase of the cell cycle. The APC/C complex acts by mediating ubiquitination and subsequent degradation of target proteins. Developmental role in early embryogenesis and the metaphase to anaphase transition in oocyte and spermatocyte meiosis and mitosis in germ cells. Required for embryonic anterior-posterior axis formation. Plays a role in regulating the abundance of glr-1 receptors in postmitotic neurons, which may in turn control animal locomotion. In Caenorhabditis elegans, this protein is Cell division cycle protein 27 homolog.